Here is a 92-residue protein sequence, read N- to C-terminus: Small ribosomal subunit protein uS19c (92 aa).

This sequence belongs to the universal ribosomal protein uS19 family.

Its subcellular location is the plastid. It localises to the chloroplast. Its function is as follows. Protein S19 forms a complex with S13 that binds strongly to the 16S ribosomal RNA. This chain is Small ribosomal subunit protein uS19c, found in Nicotiana sylvestris (Wood tobacco).